The sequence spans 335 residues: Holliday junction branch migration complex subunit RuvB (335 aa).

The tract at residues 1 to 181 (MERIVEVEKF…FGMHFRLQFY (181 aa)) is large ATPase domain (RuvB-L). ATP-binding positions include Leu20, Arg21, Gly62, Lys65, Thr66, Thr67, 128–130 (EDF), Arg171, Tyr181, and Arg218. Residue Thr66 coordinates Mg(2+). Residues 182-252 (TPQELAQIIT…RTQKALEALG (71 aa)) are small ATPAse domain (RuvB-S). The head domain (RuvB-H) stretch occupies residues 255-335 (ERGFDELDLK…LTPNIQNSLF (81 aa)). DNA-binding residues include Arg309 and Arg314.

This sequence belongs to the RuvB family. In terms of assembly, homohexamer. Forms an RuvA(8)-RuvB(12)-Holliday junction (HJ) complex. HJ DNA is sandwiched between 2 RuvA tetramers; dsDNA enters through RuvA and exits via RuvB. An RuvB hexamer assembles on each DNA strand where it exits the tetramer. Each RuvB hexamer is contacted by two RuvA subunits (via domain III) on 2 adjacent RuvB subunits; this complex drives branch migration. In the full resolvosome a probable DNA-RuvA(4)-RuvB(12)-RuvC(2) complex forms which resolves the HJ.

The protein localises to the cytoplasm. It catalyses the reaction ATP + H2O = ADP + phosphate + H(+). The RuvA-RuvB-RuvC complex processes Holliday junction (HJ) DNA during genetic recombination and DNA repair, while the RuvA-RuvB complex plays an important role in the rescue of blocked DNA replication forks via replication fork reversal (RFR). RuvA specifically binds to HJ cruciform DNA, conferring on it an open structure. The RuvB hexamer acts as an ATP-dependent pump, pulling dsDNA into and through the RuvAB complex. RuvB forms 2 homohexamers on either side of HJ DNA bound by 1 or 2 RuvA tetramers; 4 subunits per hexamer contact DNA at a time. Coordinated motions by a converter formed by DNA-disengaged RuvB subunits stimulates ATP hydrolysis and nucleotide exchange. Immobilization of the converter enables RuvB to convert the ATP-contained energy into a lever motion, pulling 2 nucleotides of DNA out of the RuvA tetramer per ATP hydrolyzed, thus driving DNA branch migration. The RuvB motors rotate together with the DNA substrate, which together with the progressing nucleotide cycle form the mechanistic basis for DNA recombination by continuous HJ branch migration. Branch migration allows RuvC to scan DNA until it finds its consensus sequence, where it cleaves and resolves cruciform DNA. In Nitratiruptor sp. (strain SB155-2), this protein is Holliday junction branch migration complex subunit RuvB.